Consider the following 523-residue polypeptide: MNLEEHLSLGEFHVSNLIKNHISRGSPIQALVLYGGIRRRGVYFPGWVPLILRACACVVPRVVLGKLLHSESIKFGVCSDVMVGSSLISMYGKCGCVVSARKVFDEMPERNVATWNAMIGGYMSNGDAVLASGLFEEISVCRNTVTWIEMIKGYGKRIEIEKARELFERMPFELKNVKAWSVMLGVYVNNRKMEDARKFFEDIPEKNAFVWSLMMSGYFRIGDVHEARAIFYRVFARDLVIWNTLIAGYAQNGYSDDAIDAFFNMQGEGYEPDAVTVSSILSACAQSGRLDVGREVHSLINHRGIELNQFVSNALIDMYAKCGDLENATSVFESISVRSVACCNSMISCLAIHGKGKEALEMFSTMESLDLKPDEITFIAVLTACVHGGFLMEGLKIFSEMKTQDVKPNVKHFGCLIHLLGRSGKLKEAYRLVKEMHVKPNDTVLGALLGACKVHMDTEMAEQVMKIIETAGSITNSYSENHLASISNLYAHTERWQTAEALRVEMEKRGLEKSPGLSSLVLT.

13 PPR repeats span residues 10 to 43, 44 to 79, 80 to 114, 115 to 141, 143 to 173, 176 to 210, 211 to 237, 238 to 272, 273 to 307, 308 to 338, 339 to 373, 374 to 408, and 409 to 439; these read GEFHVSNLIKNHISRGSPIQALVLYGGIRRRGVY, FPGWVPLILRACACVVPRVVLGKLLHSESIKFGVCS, DVMVGSSLISMYGKCGCVVSARKVFDEMPERNVAT, WNAMIGGYMSNGDAVLASGLFEEISVC, NTVTWIEMIKGYGKRIEIEKARELFERMPFE, NVKAWSVMLGVYVNNRKMEDARKFFEDIPEKNAFV, WSLMMSGYFRIGDVHEARAIFYRVFAR, DLVIWNTLIAGYAQNGYSDDAIDAFFNMQGEGYEP, DAVTVSSILSACAQSGRLDVGREVHSLINHRGIEL, NQFVSNALIDMYAKCGDLENATSVFESISVR, SVACCNSMISCLAIHGKGKEALEMFSTMESLDLKP, DEITFIAVLTACVHGGFLMEGLKIFSEMKTQDVKP, and NVKHFGCLIHLLGRSGKLKEAYRLVKEMHVK. Residues 444 to 523 are type E motif; it reads VLGALLGACK…SPGLSSLVLT (80 aa).

This sequence belongs to the PPR family. PCMP-E subfamily.

In Arabidopsis thaliana (Mouse-ear cress), this protein is Pentatricopeptide repeat-containing protein At3g21470 (PCMP-E29).